The primary structure comprises 154 residues: Protein X (154 aa).

Residues Pro68–Phe117 are mitochondrial targeting sequence.

This sequence belongs to the orthohepadnavirus protein X family. In terms of assembly, may form homodimer. May interact with host CEBPA, CFLAR, CREB1, DDB1, E4F1, HBXIP, HSPD1/HSP60, NFKBIA, POLR2E and SMAD4. Interacts with host SMC5-SMC6 complex and induces its degradation. Interacts with host TRPC4AP; leading to prevent ubiquitination of TRPC4AP. Interacts with host PLSCR1; this interaction promotes ubiquitination and degradation of HBx and impairs HBx-mediated cell proliferation. A fraction may be phosphorylated in insect cells and HepG2 cells, a human hepatoblastoma cell line. Phosphorylated in vitro by host protein kinase C or mitogen-activated protein kinase. N-acetylated in insect cells.

Its subcellular location is the host cytoplasm. The protein localises to the host nucleus. The protein resides in the host mitochondrion. Its function is as follows. Multifunctional protein that plays a role in silencing host antiviral defenses and promoting viral transcription. Does not seem to be essential for HBV infection. May be directly involved in development of cirrhosis and liver cancer (hepatocellular carcinoma). Most of cytosolic activities involve modulation of cytosolic calcium. The effect on apoptosis is controversial depending on the cell types in which the studies have been conducted. May induce apoptosis by localizing in mitochondria and causing loss of mitochondrial membrane potential. May also modulate apoptosis by binding host CFLAR, a key regulator of the death-inducing signaling complex (DISC). Promotes viral transcription by using the host E3 ubiquitin ligase DDB1 to target the SMC5-SMC6 complex to proteasomal degradation. This host complex would otherwise bind to viral episomal DNA, and prevents its transcription. Moderately stimulates transcription of many different viral and cellular transcription elements. Promoters and enhancers stimulated by HBx contain DNA binding sites for NF-kappa-B, AP-1, AP-2, c-EBP, ATF/CREB, or the calcium-activated factor NF-AT. The polypeptide is Protein X (Hepatitis B virus genotype C subtype adr (isolate Japan/Nishioka/1983) (HBV-C)).